A 490-amino-acid polypeptide reads, in one-letter code: Type I restriction enzyme EcoEI methylase subunit (490 aa).

S-adenosyl-L-methionine contacts are provided by residues 163-168 (EFYTPR), 193-195 (TGG), and Glu226.

It belongs to the N(4)/N(6)-methyltransferase family. The type I restriction/modification system is composed of three polypeptides R, M and S; the restriction enzyme has stoichiometry R(2)M(2)S(1) while the methyltransferase is M(2)S(1).

The enzyme catalyses a 2'-deoxyadenosine in DNA + S-adenosyl-L-methionine = an N(6)-methyl-2'-deoxyadenosine in DNA + S-adenosyl-L-homocysteine + H(+). In terms of biological role, the subtype gamma methyltransferase (M) subunit of a type I restriction enzyme. The M and S subunits together form a methyltransferase (MTase) that methylates two adenine residues of the sequence 5'-GAGN(7)ATGC-3'. In the presence of the R subunit the complex can also act as an endonuclease, binding to the same target sequence but cutting the DNA some distance from this site. Whether the DNA is cut or modified depends on the methylation state of the target sequence. When the target site is unmodified, the DNA is cut. When the target site is hemimethylated, the complex acts as a maintenance MTase modifying the DNA so that both strands become methylated. After locating a non-methylated recognition site, the enzyme complex serves as a molecular motor that translocates DNA in an ATP-dependent manner until a collision occurs that triggers cleavage. In Escherichia coli, this protein is Type I restriction enzyme EcoEI methylase subunit (hsdM).